The sequence spans 83 residues: Putative membrane protein insertion efficiency factor (83 aa).

This sequence belongs to the UPF0161 family.

Its subcellular location is the cell membrane. Could be involved in insertion of integral membrane proteins into the membrane. This Staphylococcus saprophyticus subsp. saprophyticus (strain ATCC 15305 / DSM 20229 / NCIMB 8711 / NCTC 7292 / S-41) protein is Putative membrane protein insertion efficiency factor.